Here is a 403-residue protein sequence, read N- to C-terminus: Leu/Ile/Val-binding protein homolog 8 (403 aa).

A signal peptide spans 1-26 (MRLSRLLIGASLGVALSSTVFTAALA).

This sequence belongs to the leucine-binding protein family.

Component of an amino-acid transport system. This Brucella abortus (strain 2308) protein is Leu/Ile/Val-binding protein homolog 8.